Reading from the N-terminus, the 467-residue chain is Uronate isomerase (467 aa).

It belongs to the metallo-dependent hydrolases superfamily. Uronate isomerase family.

It catalyses the reaction D-glucuronate = D-fructuronate. The enzyme catalyses aldehydo-D-galacturonate = keto-D-tagaturonate. The protein operates within carbohydrate metabolism; pentose and glucuronate interconversion. The protein is Uronate isomerase of Flavobacterium johnsoniae (strain ATCC 17061 / DSM 2064 / JCM 8514 / BCRC 14874 / CCUG 350202 / NBRC 14942 / NCIMB 11054 / UW101) (Cytophaga johnsonae).